Reading from the N-terminus, the 238-residue chain is Ribonuclease PH (238 aa).

Phosphate contacts are provided by residues R86 and 124-126; that span reads GTR.

This sequence belongs to the RNase PH family. In terms of assembly, homohexameric ring arranged as a trimer of dimers.

The catalysed reaction is tRNA(n+1) + phosphate = tRNA(n) + a ribonucleoside 5'-diphosphate. Its function is as follows. Phosphorolytic 3'-5' exoribonuclease that plays an important role in tRNA 3'-end maturation. Removes nucleotide residues following the 3'-CCA terminus of tRNAs; can also add nucleotides to the ends of RNA molecules by using nucleoside diphosphates as substrates, but this may not be physiologically important. Probably plays a role in initiation of 16S rRNA degradation (leading to ribosome degradation) during starvation. This chain is Ribonuclease PH, found in Mannheimia haemolytica (Pasteurella haemolytica).